Consider the following 477-residue polypeptide: Bifunctional protein HldE (477 aa).

Residues 1–321 (MKILKSFTPR…EYEASLHKST (321 aa)) are ribokinase. 198–201 (NKKE) serves as a coordination point for ATP. Residue Asp266 is part of the active site. The segment at 348–477 (FTNGCFDILH…IQKIKGDLHV (130 aa)) is cytidylyltransferase.

In the N-terminal section; belongs to the carbohydrate kinase PfkB family. The protein in the C-terminal section; belongs to the cytidylyltransferase family. As to quaternary structure, homodimer.

The enzyme catalyses D-glycero-beta-D-manno-heptose 7-phosphate + ATP = D-glycero-beta-D-manno-heptose 1,7-bisphosphate + ADP + H(+). The catalysed reaction is D-glycero-beta-D-manno-heptose 1-phosphate + ATP + H(+) = ADP-D-glycero-beta-D-manno-heptose + diphosphate. The protein operates within nucleotide-sugar biosynthesis; ADP-L-glycero-beta-D-manno-heptose biosynthesis; ADP-L-glycero-beta-D-manno-heptose from D-glycero-beta-D-manno-heptose 7-phosphate: step 1/4. It functions in the pathway nucleotide-sugar biosynthesis; ADP-L-glycero-beta-D-manno-heptose biosynthesis; ADP-L-glycero-beta-D-manno-heptose from D-glycero-beta-D-manno-heptose 7-phosphate: step 3/4. Its function is as follows. Catalyzes the phosphorylation of D-glycero-D-manno-heptose 7-phosphate at the C-1 position to selectively form D-glycero-beta-D-manno-heptose-1,7-bisphosphate. In terms of biological role, catalyzes the ADP transfer from ATP to D-glycero-beta-D-manno-heptose 1-phosphate, yielding ADP-D-glycero-beta-D-manno-heptose. The chain is Bifunctional protein HldE from Sulfurimonas denitrificans (strain ATCC 33889 / DSM 1251) (Thiomicrospira denitrificans (strain ATCC 33889 / DSM 1251)).